Reading from the N-terminus, the 109-residue chain is Nascent polypeptide-associated complex protein (109 aa).

The 67-residue stretch at 3–69 (PMNPKQLKKL…TEEERVVLKI (67 aa)) folds into the NAC-A/B domain.

Belongs to the NAC-alpha family. Homodimer. Interacts with the ribosome. Binds ribosomal RNA.

In terms of biological role, contacts the emerging nascent chain on the ribosome. The protein is Nascent polypeptide-associated complex protein of Pyrococcus abyssi (strain GE5 / Orsay).